The sequence spans 215 residues: Rod-determining factor A (215 aa).

Its function is as follows. Involved in cell-shape determination. Required for the formation of rods and wild-type-like motility. The protein is Rod-determining factor A of Haloferax volcanii (strain ATCC 29605 / DSM 3757 / JCM 8879 / NBRC 14742 / NCIMB 2012 / VKM B-1768 / DS2) (Halobacterium volcanii).